The following is a 250-amino-acid chain: Flavin-dependent thymidylate synthase (250 aa).

The region spanning Leu7 to Ala233 is the ThyX domain. Residues Ser71, Arg95 to Arg97, and Gln103 contribute to the FAD site. Residues Glu92 to Arg95, Gln103 to Arg107, and Arg172 contribute to the dUMP site. The short motif at Arg95–Ser105 is the ThyX motif element. FAD contacts are provided by residues Asn188–Arg190 and His194. Arg199 provides a ligand contact to dUMP. The active-site Involved in ionization of N3 of dUMP, leading to its activation is the Arg199.

The protein belongs to the thymidylate synthase ThyX family. Homotetramer. FAD serves as cofactor.

The enzyme catalyses dUMP + (6R)-5,10-methylene-5,6,7,8-tetrahydrofolate + NADPH + H(+) = dTMP + (6S)-5,6,7,8-tetrahydrofolate + NADP(+). Its pathway is pyrimidine metabolism; dTTP biosynthesis. Its function is as follows. Catalyzes the reductive methylation of 2'-deoxyuridine-5'-monophosphate (dUMP) to 2'-deoxythymidine-5'-monophosphate (dTMP) while utilizing 5,10-methylenetetrahydrofolate (mTHF) as the methyl donor, and NADPH and FADH(2) as the reductant. The sequence is that of Flavin-dependent thymidylate synthase from Mycobacterium avium (strain 104).